A 531-amino-acid polypeptide reads, in one-letter code: MRHRGLGLAALLALLAAVAPRSSAAAGAALWPMPLSVKTSPRLLHLSRDNFSIGYGPSSTAGPTCSLLQEAFRRYHEYIFGFDKRQRRPAKPNSAIELQQLLVTVVLDSECDLFPNITSDESYTLLVKEPVAFLKANRVWGVLRGLETFSQLIYQDSYGTFTVNESDIIDSPRFPHRGILIDTARHFLPVKSILKTLDAMAFNKFNVLHWHIVDDQSFPYQSVTFPELSNKGSYSLSHVYTPNDVHTVIEYARLRGIRVIPEFDSPGHTQSWGKGQKDLLTPCYNEHKQSGTFGPINPILNSTYNFLSQFFKEVSMVFPDHFVHLGGDEVEFQCWESNPEIQGFMKQKGFGKDFRRLESFYLQKLLGIVSTVKKGSIVWQEVFDDHVKLLPGTIVQVWKNQVYTEELREVTAAGFPVILSAPWYLDWISYGQDWRNYYKVDPLHFDGSQEQKKLVIGGEACLWGEFVDATNLTPRLWPRASAVGERLWSPEDITSVGNAYNRLTVHRCRMVRRGISAEPLFTGYCDYEYKT.

The N-terminal stretch at 1–24 is a signal peptide; it reads MRHRGLGLAALLALLAAVAPRSSA. An N-linked (GlcNAc...) asparagine glycan is attached at N50. Residues C65 and C111 are joined by a disulfide bond. N-linked (GlcNAc...) asparagine glycosylation is found at N116, N164, and N301. 2 cysteine pairs are disulfide-bonded: C283–C334 and C508–C525. The active-site Proton donor is the E329.

Belongs to the glycosyl hydrolase 20 family. As to quaternary structure, there are 3 forms of beta-hexosaminidase: hexosaminidase A is a heterodimer composed of one subunit alpha and one subunit beta (chain A and B); hexosaminidase B is a homodimer of two beta subunits (two chains A and B); hexosaminidase S is a homodimer of two alpha subunits. The composition of the dimer (isozyme A versus isozyme S) has a significant effect on the substrate specificity of the alpha subunit active site.

The protein resides in the lysosome. It localises to the cytoplasmic vesicle. It is found in the secretory vesicle. The protein localises to the cortical granule. It carries out the reaction Hydrolysis of terminal non-reducing N-acetyl-D-hexosamine residues in N-acetyl-beta-D-hexosaminides.. The enzyme catalyses N-acetyl-beta-D-galactosaminyl-(1-&gt;4)-beta-D-3-sulfogalactosyl-(1-&gt;4)-beta-D-glucosyl-(1&lt;-&gt;1')-ceramide + H2O = a beta-D-3-sulfogalactosyl-(1-&gt;4)-beta-D-glucosyl-(1&lt;-&gt;1')-ceramide + N-acetyl-beta-D-galactosamine. It catalyses the reaction a ganglioside GM2 (d18:1(4E)) + H2O = a ganglioside GM3 (d18:1(4E)) + N-acetyl-beta-D-galactosamine. The catalysed reaction is a ganglioside GM2 + H2O = a ganglioside GM3 + N-acetyl-beta-D-galactosamine. It carries out the reaction beta-D-GalNAc-(1-&gt;4)-alpha-L-IdoA-(1-&gt;3)-beta-D-GalNAc-4-sulfate-(1-&gt;4)-alpha-L-IdoA-(1-&gt;3)-D-GalNAc-4-sulfate + H2O = alpha-L-IdoA-(1-&gt;3)-beta-D-GalNAc-4-sulfate-(1-&gt;4)-alpha-L-IdoA-(1-&gt;3)-D-GalNAc-4-sulfate + N-acetyl-D-galactosamine. The enzyme catalyses N-acetyl-beta-D-6-sulfogalactosaminyl-(1-&gt;4)-alpha-L-iduronyl-(1-&gt;3)-N-acetyl-D-6-sulfogalactosamine + H2O = alpha-L-iduronyl-(1-&gt;3)-N-acetyl-D-6-sulfogalactosamine + N-acetyl-D-6-sulfogalactosamine. Its activity is regulated as follows. Addition of GM2A stimulates the hydrolysis of sulfated glycosphingolipid SM2 and the ganglioside GM2. Its function is as follows. Hydrolyzes the non-reducing end N-acetyl-D-hexosamine and/or sulfated N-acetyl-D-hexosamine of glycoconjugates, such as the oligosaccharide moieties from proteins and neutral glycolipids, or from certain mucopolysaccharides. The isozyme B does not hydrolyze each of these substrates, however hydrolyzes efficiently neutral oligosaccharide. Only the isozyme A is responsible for the degradation of GM2 gangliosides in the presence of GM2A. During fertilization is responsible, at least in part, for the zona block to polyspermy. Present in the cortical granules of non-activated oocytes, is exocytosed during the cortical reaction in response to oocyte activation and inactivates the sperm galactosyltransferase-binding site, accounting for the block in sperm binding to the zona pellucida. The polypeptide is Beta-hexosaminidase subunit beta (Felis catus (Cat)).